The primary structure comprises 124 residues: Small ribosomal subunit protein uS12 (124 aa).

The residue at position 89 (aspartate 89) is a 3-methylthioaspartic acid.

The protein belongs to the universal ribosomal protein uS12 family. In terms of assembly, part of the 30S ribosomal subunit. Contacts proteins S8 and S17. May interact with IF1 in the 30S initiation complex.

Its function is as follows. With S4 and S5 plays an important role in translational accuracy. Interacts with and stabilizes bases of the 16S rRNA that are involved in tRNA selection in the A site and with the mRNA backbone. Located at the interface of the 30S and 50S subunits, it traverses the body of the 30S subunit contacting proteins on the other side and probably holding the rRNA structure together. The combined cluster of proteins S8, S12 and S17 appears to hold together the shoulder and platform of the 30S subunit. This is Small ribosomal subunit protein uS12 from Yersinia enterocolitica serotype O:8 / biotype 1B (strain NCTC 13174 / 8081).